A 128-amino-acid chain; its full sequence is MSSLQRTAPASQAVSLPLEQVKEALGEVLNALQSPTGSARLEEARENSGNDLGKVLQLLLPAAVQIQQEVLQNYGFSADGEGVLRFARLVKSYESQDPEIAAMSSKLKSFFLPPLPLPPHAGLSAPSS.

This sequence belongs to the UPF0456 family.

It localises to the cytoplasm. This Xenopus laevis (African clawed frog) protein is Protein C10.